We begin with the raw amino-acid sequence, 273 residues long: MALKNFNPITPSLRELVQVDKTSLWKGRPLKSLTKGISKTGGRNNQGKITSWHRGGGHKKLYRIIDFKRNKIDVSAIVERIEYDPNRTAFIALIKYEDGEYSYILAPQKLSVGDRVISSQDADIKIGNCLPLKCIPIGTTLHNVEMKVGKGGQIARSAGTSVDLVGKDSGYAQIKLRSGEFRLVPLDCKATIGSISNPDQKNINLGKAGRNRWLGWRPHVRGVAMNPVDHPHGGGEGKTSGGRHPVTPWGFPTKGKKTRKNKRTSKFIVKKRK.

The segment at 228-273 (VDHPHGGGEGKTSGGRHPVTPWGFPTKGKKTRKNKRTSKFIVKKRK) is disordered. A compositionally biased stretch (basic residues) spans 254–273 (KGKKTRKNKRTSKFIVKKRK).

Belongs to the universal ribosomal protein uL2 family. As to quaternary structure, part of the 50S ribosomal subunit. Forms a bridge to the 30S subunit in the 70S ribosome.

Functionally, one of the primary rRNA binding proteins. Required for association of the 30S and 50S subunits to form the 70S ribosome, for tRNA binding and peptide bond formation. It has been suggested to have peptidyltransferase activity; this is somewhat controversial. Makes several contacts with the 16S rRNA in the 70S ribosome. The chain is Large ribosomal subunit protein uL2 from Rickettsia peacockii (strain Rustic).